Consider the following 208-residue polypeptide: Ribosomal RNA small subunit methyltransferase G (208 aa).

Residues Gly77, Leu82, 128–129 (VE), and Arg142 each bind S-adenosyl-L-methionine.

Belongs to the methyltransferase superfamily. RNA methyltransferase RsmG family.

Its subcellular location is the cytoplasm. It catalyses the reaction guanosine(527) in 16S rRNA + S-adenosyl-L-methionine = N(7)-methylguanosine(527) in 16S rRNA + S-adenosyl-L-homocysteine. Its function is as follows. Specifically methylates the N7 position of guanine in position 527 of 16S rRNA. This chain is Ribosomal RNA small subunit methyltransferase G, found in Chromohalobacter salexigens (strain ATCC BAA-138 / DSM 3043 / CIP 106854 / NCIMB 13768 / 1H11).